The sequence spans 182 residues: Large ribosomal subunit protein uL5 (182 aa).

This sequence belongs to the universal ribosomal protein uL5 family. As to quaternary structure, part of the 50S ribosomal subunit; part of the 5S rRNA/L5/L18/L25 subcomplex. Contacts the 5S rRNA and the P site tRNA. Forms a bridge to the 30S subunit in the 70S ribosome.

Functionally, this is one of the proteins that bind and probably mediate the attachment of the 5S RNA into the large ribosomal subunit, where it forms part of the central protuberance. In the 70S ribosome it contacts protein S13 of the 30S subunit (bridge B1b), connecting the 2 subunits; this bridge is implicated in subunit movement. Contacts the P site tRNA; the 5S rRNA and some of its associated proteins might help stabilize positioning of ribosome-bound tRNAs. The sequence is that of Large ribosomal subunit protein uL5 from Borrelia garinii subsp. bavariensis (strain ATCC BAA-2496 / DSM 23469 / PBi) (Borreliella bavariensis).